The following is a 423-amino-acid chain: Alpha-1-antichymotrypsin (423 aa).

The signal sequence occupies residues 1–23 (MERMLPFLALGLLVAGFCPAVLC). N-linked (GlcNAc...) asparagine glycosylation is found at Asn93, Asn106, Asn127, Asn186, and Asn271. The tract at residues 369 to 394 (GTEASAATAVKITLLSALVDPMTIVR) is RCL.

Belongs to the serpin family. In terms of assembly, interacts with DNAJC1. In terms of tissue distribution, plasma.

The protein resides in the secreted. Although its physiological function is unclear, it can inhibit neutrophil cathepsin G and mast cell chymase, both of which can convert angiotensin-1 to the active angiotensin-2. This is Alpha-1-antichymotrypsin (SERPINA3) from Pongo abelii (Sumatran orangutan).